The following is a 150-amino-acid chain: UPF0756 membrane protein ABSDF1616 (150 aa).

4 consecutive transmembrane segments (helical) span residues 1–21, 45–65, 83–103, and 115–135; these read MLAQ…CGLL, FFPY…TIGV, FISF…WLGG, and VVAG…GVPV.

Belongs to the UPF0756 family.

Its subcellular location is the cell membrane. In Acinetobacter baumannii (strain SDF), this protein is UPF0756 membrane protein ABSDF1616.